Here is a 356-residue protein sequence, read N- to C-terminus: Replication factor C subunit 3 (356 aa).

Position 20 is an N6-acetyllysine (lysine 20). Serine 125 bears the Phosphoserine mark.

Belongs to the activator 1 small subunits family. In terms of assembly, subunit of the RFC complex, an heteropentameric complex consisting of a large subunit RFC1 and four small subunits RFC2, RFC3, RFC4 and RFC5; the RFC complex interacts with PCNA. Forms an heterotetrameric complex with RFC2, RFC4 and RFC5; this complex has ATPase activity but is not stimulated by PCNA. The heterotetramer of subunits RFC2, RFC3, RFC4 and RFC5 interacts with RAD17. Interacts with CNTD1; this interaction facilitates crossover formation.

Its subcellular location is the nucleus. Its function is as follows. Subunit of the replication factor C (RFC) complex which acts during elongation of primed DNA templates by DNA polymerases delta and epsilon, and is necessary for ATP-dependent loading of proliferating cell nuclear antigen (PCNA) onto primed DNA. The chain is Replication factor C subunit 3 (RFC3) from Bos taurus (Bovine).